Here is a 590-residue protein sequence, read N- to C-terminus: Aspartate--tRNA(Asp/Asn) ligase (590 aa).

Residue glutamate 178 participates in L-aspartate binding. Residues 202-205 (QIYK) form an aspartate region. Arginine 224 lines the L-aspartate pocket. ATP is bound by residues 224–226 (RDE) and glutamine 233. Histidine 453 contacts L-aspartate. Glutamate 487 contributes to the ATP binding site. Residue arginine 494 participates in L-aspartate binding. Residue 539-542 (GLDR) coordinates ATP.

The protein belongs to the class-II aminoacyl-tRNA synthetase family. Type 1 subfamily. Homodimer.

It localises to the cytoplasm. It carries out the reaction tRNA(Asx) + L-aspartate + ATP = L-aspartyl-tRNA(Asx) + AMP + diphosphate. Aspartyl-tRNA synthetase with relaxed tRNA specificity since it is able to aspartylate not only its cognate tRNA(Asp) but also tRNA(Asn). Reaction proceeds in two steps: L-aspartate is first activated by ATP to form Asp-AMP and then transferred to the acceptor end of tRNA(Asp/Asn). In Treponema denticola (strain ATCC 35405 / DSM 14222 / CIP 103919 / JCM 8153 / KCTC 15104), this protein is Aspartate--tRNA(Asp/Asn) ligase.